A 145-amino-acid polypeptide reads, in one-letter code: Basic phospholipase A2 cL037 (145 aa).

Positions 1–21 (MYPAHLLVLLAVCVSLLGASA) are cleaved as a signal peptide. A propeptide spanning residues 22–27 (ILPLPL) is cleaved from the precursor. 7 disulfides stabilise this stretch: cysteine 38–cysteine 98, cysteine 54–cysteine 144, cysteine 56–cysteine 72, cysteine 71–cysteine 125, cysteine 78–cysteine 118, cysteine 87–cysteine 111, and cysteine 105–cysteine 116. Ca(2+) contacts are provided by tyrosine 55, glycine 57, and glycine 59. The active site involves histidine 75. Aspartate 76 is a binding site for Ca(2+). Residue aspartate 119 is part of the active site.

It belongs to the phospholipase A2 family. Group I subfamily. D49 sub-subfamily. The cofactor is Ca(2+). Expressed by the venom gland.

The protein localises to the secreted. It carries out the reaction a 1,2-diacyl-sn-glycero-3-phosphocholine + H2O = a 1-acyl-sn-glycero-3-phosphocholine + a fatty acid + H(+). Functionally, PLA2 catalyzes the calcium-dependent hydrolysis of the 2-acyl groups in 3-sn-phosphoglycerides. The polypeptide is Basic phospholipase A2 cL037 (Laticauda semifasciata (Black-banded sea krait)).